Reading from the N-terminus, the 870-residue chain is Patatin-like phospholipase domain-containing protein NCU11180 (870 aa).

Disordered stretches follow at residues 1–24 and 131–158; these read MADD…PPEA and KVIK…KGVA. A compositionally biased stretch (basic and acidic residues) spans 131-141; the sequence is KVIKTDRDEKR. Residues 142-155 show a composition bias toward basic residues; the sequence is NKRGKDRKNKKPRK. The chain crosses the membrane as a helical span at residues 183–203; it reads WPFLLFVSFWIVGLGMAYLAT. Positions 281-320 are disordered; it reads EEVERELESQSQNSDSGVASGEETSNTKAGGGNNGNDKKT. Over residues 289–308 the composition is skewed to polar residues; it reads SQSQNSDSGVASGEETSNTK. A PNPLA domain is found at 399–590; it reads LCLSGGATFA…RTDIPIKSLN (192 aa). Residues 430 to 434 carry the GXSXG motif; sequence GTSGG. The Nucleophile role is filled by Ser432. The active-site Proton acceptor is Asp577. Disordered stretches follow at residues 735–786 and 804–870; these read RRET…DRRG and GREG…HSRT. The segment covering 818–834 has biased composition (acidic residues); it reads TEDELTMTELEGEDDDG.

The protein belongs to the PLPL family.

It is found in the membrane. Probable lipid hydrolase. In Neurospora crassa (strain ATCC 24698 / 74-OR23-1A / CBS 708.71 / DSM 1257 / FGSC 987), this protein is Patatin-like phospholipase domain-containing protein NCU11180.